We begin with the raw amino-acid sequence, 511 residues long: Cytochrome P450 4B1 (511 aa).

Heme is bound by residues glutamate 315 and cysteine 453.

Belongs to the cytochrome P450 family. Heme serves as cofactor.

The protein localises to the endoplasmic reticulum membrane. Its subcellular location is the microsome membrane. The catalysed reaction is an organic molecule + reduced [NADPH--hemoprotein reductase] + O2 = an alcohol + oxidized [NADPH--hemoprotein reductase] + H2O + H(+). In terms of biological role, cytochromes P450 are a group of heme-thiolate monooxygenases. In liver microsomes, this enzyme is involved in an NADPH-dependent electron transport pathway. It oxidizes a variety of structurally unrelated compounds, including steroids, fatty acids, and xenobiotics. In Rattus norvegicus (Rat), this protein is Cytochrome P450 4B1 (Cyp4b1).